The primary structure comprises 203 residues: dITP/XTP pyrophosphatase (203 aa).

8–13 (TANKGK) is a substrate binding site. Residues E41 and D70 each coordinate Mg(2+). D70 serves as the catalytic Proton acceptor. Substrate contacts are provided by residues S71, 153–156 (FGYD), K176, and 181–182 (HR).

This sequence belongs to the HAM1 NTPase family. As to quaternary structure, homodimer. Requires Mg(2+) as cofactor.

It catalyses the reaction XTP + H2O = XMP + diphosphate + H(+). It carries out the reaction dITP + H2O = dIMP + diphosphate + H(+). The catalysed reaction is ITP + H2O = IMP + diphosphate + H(+). Its function is as follows. Pyrophosphatase that catalyzes the hydrolysis of nucleoside triphosphates to their monophosphate derivatives, with a high preference for the non-canonical purine nucleotides XTP (xanthosine triphosphate), dITP (deoxyinosine triphosphate) and ITP. Seems to function as a house-cleaning enzyme that removes non-canonical purine nucleotides from the nucleotide pool, thus preventing their incorporation into DNA/RNA and avoiding chromosomal lesions. In Listeria monocytogenes serotype 4b (strain F2365), this protein is dITP/XTP pyrophosphatase.